The chain runs to 265 residues: Undecaprenyl-diphosphatase (265 aa).

Transmembrane regions (helical) follow at residues 42–62, 90–110, 115–135, 160–182, 195–215, 222–242, and 245–265; these read EAIP…IVYF, ISFL…LLLF, VEIS…VTGI, VAQG…ALLL, FLMS…MGMV, IVGL…FLKV, and KVDF…TMFL.

Belongs to the UppP family.

It localises to the cell membrane. It catalyses the reaction di-trans,octa-cis-undecaprenyl diphosphate + H2O = di-trans,octa-cis-undecaprenyl phosphate + phosphate + H(+). Catalyzes the dephosphorylation of undecaprenyl diphosphate (UPP). The chain is Undecaprenyl-diphosphatase from Methanococcoides burtonii (strain DSM 6242 / NBRC 107633 / OCM 468 / ACE-M).